A 472-amino-acid polypeptide reads, in one-letter code: Serine incorporator 3 (472 aa).

Residues Met1–Lys96 are Extracellular-facing. The N-linked (GlcNAc...) asparagine glycan is linked to Asn34. Residues Ala97–Leu117 traverse the membrane as a helical segment. Over Lys118–Gly132 the chain is Cytoplasmic. Residues Phe133–Gly153 traverse the membrane as a helical segment. Topologically, residues Gly154 to Glu158 are extracellular. The helical transmembrane segment at Val159–Leu179 threads the bilayer. Residues Val180–Leu206 lie on the Cytoplasmic side of the membrane. Residues Leu207–Phe227 traverse the membrane as a helical segment. The Extracellular portion of the chain corresponds to Tyr228–Lys238. Residues Val239 to Lys259 traverse the membrane as a helical segment. Topologically, residues Val260–Ser329 are cytoplasmic. A helical transmembrane segment spans residues Gly330–Tyr350. Over Ser351–Ser405 the chain is Extracellular. Ser371 is modified (phosphoserine). Residues Phe406–Tyr426 form a helical membrane-spanning segment. At Ser427 to Lys445 the chain is on the cytoplasmic side. Residues Met446–Leu466 traverse the membrane as a helical segment. The Extracellular portion of the chain corresponds to Thr467–Ser472.

Belongs to the TDE1 family. In terms of processing, N-glycosylated. Highly expressed in the neuronal populations such as Purkinje cells in the cerebellum, brainstem and spinal motor neurons, locus coeruleus and raphe nuclei. Highly expressed also in thymus, kidney liver and testis.

The protein resides in the cell membrane. It localises to the golgi apparatus membrane. It carries out the reaction a 1,2-diacyl-sn-glycero-3-phospho-L-serine(in) = a 1,2-diacyl-sn-glycero-3-phospho-L-serine(out). The enzyme catalyses a 1,2-diacyl-sn-glycero-3-phosphocholine(in) = a 1,2-diacyl-sn-glycero-3-phosphocholine(out). It catalyses the reaction a 1,2-diacyl-sn-glycero-3-phosphoethanolamine(in) = a 1,2-diacyl-sn-glycero-3-phosphoethanolamine(out). Functionally, restriction factor required to restrict infectivity of gammaretroviruses: acts by inhibiting an early step of viral infection. Impairs the penetration of the viral particle into the cytoplasm. Non-ATP-dependent, non-specific lipid transporter for phosphatidylserine, phosphatidylcholine, and phosphatidylethanolamine. Functions as a scramblase that flips lipids in both directions across the membrane. Phospholipid scrambling results in gammaretroviral surface exposure of phosphatidylserine and loss of membrane asymmetry, which leads to loss of infectivity. This chain is Serine incorporator 3 (Serinc3), found in Mus musculus (Mouse).